A 331-amino-acid chain; its full sequence is Glyceraldehyde-3-phosphate dehydrogenase 2 (331 aa).

Residues 11–12, aspartate 33, and arginine 78 contribute to the NAD(+) site; that span reads RI. D-glyceraldehyde 3-phosphate is bound by residues 148–150, threonine 179, 208–209, and arginine 231; these read SCT and TG. Cysteine 149 (nucleophile) is an active-site residue. Residue asparagine 313 participates in NAD(+) binding.

The protein belongs to the glyceraldehyde-3-phosphate dehydrogenase family. Homotetramer.

The protein localises to the cytoplasm. The enzyme catalyses D-glyceraldehyde 3-phosphate + phosphate + NAD(+) = (2R)-3-phospho-glyceroyl phosphate + NADH + H(+). Its pathway is carbohydrate degradation; glycolysis; pyruvate from D-glyceraldehyde 3-phosphate: step 1/5. This Kluyveromyces marxianus (Yeast) protein is Glyceraldehyde-3-phosphate dehydrogenase 2 (GAP2).